Consider the following 343-residue polypeptide: NADH-cytochrome b5 reductase 2 (343 aa).

Residues 41–61 form a helical membrane-spanning segment; the sequence is ILLGAAAVGLAGAGAYFFSGA. One can recognise an FAD-binding FR-type domain in the interval 92-197; sequence QGWLSLKLEE…KGPLPKYPWE (106 aa). 200-235 serves as a coordination point for FAD; it reads KHKHIALVAGGTGITPMYQLIRAIFNNPDDKTKVTL.

This sequence belongs to the flavoprotein pyridine nucleotide cytochrome reductase family. FAD is required as a cofactor.

The protein localises to the mitochondrion outer membrane. The enzyme catalyses 2 Fe(III)-[cytochrome b5] + NADH = 2 Fe(II)-[cytochrome b5] + NAD(+) + H(+). Its function is as follows. May mediate the reduction of outer membrane cytochrome b5. The polypeptide is NADH-cytochrome b5 reductase 2 (mcr-1) (Neurospora crassa (strain ATCC 24698 / 74-OR23-1A / CBS 708.71 / DSM 1257 / FGSC 987)).